The following is a 58-amino-acid chain: Small ribosomal subunit protein bS21 (58 aa).

The tract at residues valine 28 to phenylalanine 58 is disordered. Residues aspartate 31–serine 42 are compositionally biased toward basic and acidic residues. Residues isoleucine 43–phenylalanine 58 show a composition bias toward basic residues.

Belongs to the bacterial ribosomal protein bS21 family.

The polypeptide is Small ribosomal subunit protein bS21 (Syntrophomonas wolfei subsp. wolfei (strain DSM 2245B / Goettingen)).